A 325-amino-acid chain; its full sequence is ATP synthase gamma chain (325 aa).

The protein belongs to the ATPase gamma chain family. F-type ATPases have 2 components, CF(1) - the catalytic core - and CF(0) - the membrane proton channel. CF(1) has five subunits: alpha(3), beta(3), gamma(1), delta(1), epsilon(1). CF(0) has three main subunits: a, b and c.

The protein resides in the cell membrane. In terms of biological role, produces ATP from ADP in the presence of a proton gradient across the membrane. The gamma chain is believed to be important in regulating ATPase activity and the flow of protons through the CF(0) complex. In Corynebacterium urealyticum (strain ATCC 43042 / DSM 7109), this protein is ATP synthase gamma chain.